The following is an 884-amino-acid chain: Formin-like protein 9 (884 aa).

Residues 1-19 form the signal peptide; the sequence is MGMAMRCVLVLFSVSPVLL. A helical transmembrane segment spans residues 140–160; sequence IVALGVVGLCLVVLGVVIAAF. Disordered stretches follow at residues 179–204, 295–318, and 403–473; these read FHHG…PDPL, THDS…LSPK, and TMTN…PLPR. The segment covering 300–310 has biased composition (low complexity); it reads SDSSYQSLSPD. Positions 429-443 are enriched in pro residues; sequence KPAPPPPPQKNPPPN. Positions 464–884 constitute an FH2 domain; that stretch reads VGKDGSPLPR…QTLNLVLPLK (421 aa).

Belongs to the formin-like family. Class-I subfamily.

The protein resides in the membrane. This chain is Formin-like protein 9 (FH9), found in Oryza sativa subsp. indica (Rice).